The primary structure comprises 360 residues: Peptide chain release factor 1 (360 aa).

Gln-235 carries the post-translational modification N5-methylglutamine. A disordered region spans residues 284–313; that stretch reads AKRQQAEASTRRNLLGSGDRSDRNRTYNFP.

Belongs to the prokaryotic/mitochondrial release factor family. Post-translationally, methylated by PrmC. Methylation increases the termination efficiency of RF1.

It is found in the cytoplasm. Functionally, peptide chain release factor 1 directs the termination of translation in response to the peptide chain termination codons UAG and UAA. The protein is Peptide chain release factor 1 of Escherichia coli O127:H6 (strain E2348/69 / EPEC).